Consider the following 87-residue polypeptide: UPF0250 protein YbeD (87 aa).

Belongs to the UPF0250 family.

The sequence is that of UPF0250 protein YbeD from Shigella boydii serotype 18 (strain CDC 3083-94 / BS512).